Consider the following 557-residue polypeptide: Protein NRT1/ PTR FAMILY 5.14 (557 aa).

2 helical membrane passes run 35 to 55 (AALF…GIGS) and 78 to 98 (AWSG…DAFL). Phosphothreonine is present on threonine 103. Transmembrane regions (helical) follow at residues 104-124 (IIIS…SAFL), 133-153 (SSTS…VAIG), 183-203 (FFNW…LVVV), 209-229 (FSWA…LVLF), 320-340 (IPVW…MTFF), 357-377 (IPPA…VPIY), 401-421 (IGTG…VEFK), 443-463 (IWWL…TLVG), 479-499 (IGLA…SLLI), and 526-546 (YFYW…LFIS).

It belongs to the major facilitator superfamily. Proton-dependent oligopeptide transporter (POT/PTR) (TC 2.A.17) family. Expressed in roots.

It is found in the membrane. The sequence is that of Protein NRT1/ PTR FAMILY 5.14 (NPF5.14) from Arabidopsis thaliana (Mouse-ear cress).